The primary structure comprises 177 residues: ATP synthase subunit b, chloroplastic (177 aa).

The chain crosses the membrane as a helical span at residues 26–44 (IINLSIVLFVVIRFLGEAL).

Belongs to the ATPase B chain family. In terms of assembly, F-type ATPases have 2 components, F(1) - the catalytic core - and F(0) - the membrane proton channel. F(1) has five subunits: alpha(3), beta(3), gamma(1), delta(1), epsilon(1). F(0) has four main subunits: a(1), b(1), b'(1) and c(10-14). The alpha and beta chains form an alternating ring which encloses part of the gamma chain. F(1) is attached to F(0) by a central stalk formed by the gamma and epsilon chains, while a peripheral stalk is formed by the delta, b and b' chains.

The protein resides in the plastid. The protein localises to the chloroplast thylakoid membrane. Its function is as follows. F(1)F(0) ATP synthase produces ATP from ADP in the presence of a proton or sodium gradient. F-type ATPases consist of two structural domains, F(1) containing the extramembraneous catalytic core and F(0) containing the membrane proton channel, linked together by a central stalk and a peripheral stalk. During catalysis, ATP synthesis in the catalytic domain of F(1) is coupled via a rotary mechanism of the central stalk subunits to proton translocation. Functionally, component of the F(0) channel, it forms part of the peripheral stalk, linking F(1) to F(0). The protein is ATP synthase subunit b, chloroplastic of Bigelowiella natans (Pedinomonas minutissima).